The chain runs to 497 residues: Guanosine-5'-triphosphate,3'-diphosphate pyrophosphatase (497 aa).

The protein belongs to the GppA/Ppx family. GppA subfamily.

The enzyme catalyses guanosine 3'-diphosphate 5'-triphosphate + H2O = guanosine 3',5'-bis(diphosphate) + phosphate + H(+). It participates in purine metabolism; ppGpp biosynthesis; ppGpp from GTP: step 2/2. In terms of biological role, catalyzes the conversion of pppGpp to ppGpp. Guanosine pentaphosphate (pppGpp) is a cytoplasmic signaling molecule which together with ppGpp controls the 'stringent response', an adaptive process that allows bacteria to respond to amino acid starvation, resulting in the coordinated regulation of numerous cellular activities. This chain is Guanosine-5'-triphosphate,3'-diphosphate pyrophosphatase, found in Pseudoalteromonas translucida (strain TAC 125).